The primary structure comprises 277 residues: MALKKYNPTTPGQRQLVMVDRSALYKGKPVKVLTEGKHSNGGRNNTGRITVRFRGGGHKKTYRIVDFKRTKVDVPAKVERLEYDPNRTAFIALIKYADGEQAYILAPQRLAVGDTVIAGAYVDVKPGNVMPLGNMPIGTIVHNVEMKIGKGGQIARSAGTYAQLVGRDHDYVIVRLNSGEQRLIHGRCTATIGAVSNPDHMNISIGKAGRTRWLGWRPHNRGVVMNPIDHPHGGGEGRTSGGRHPVTPWGKPTKGKKTRSNKSTNKFILISRHKRKK.

The disordered stretch occupies residues 226–277; sequence NPIDHPHGGGEGRTSGGRHPVTPWGKPTKGKKTRSNKSTNKFILISRHKRKK.

Belongs to the universal ribosomal protein uL2 family. In terms of assembly, part of the 50S ribosomal subunit. Forms a bridge to the 30S subunit in the 70S ribosome.

Its function is as follows. One of the primary rRNA binding proteins. Required for association of the 30S and 50S subunits to form the 70S ribosome, for tRNA binding and peptide bond formation. It has been suggested to have peptidyltransferase activity; this is somewhat controversial. Makes several contacts with the 16S rRNA in the 70S ribosome. This chain is Large ribosomal subunit protein uL2, found in Rhodopseudomonas palustris (strain BisA53).